Reading from the N-terminus, the 311-residue chain is Pyrimidine-specific ribonucleoside hydrolase RihA (311 aa).

His240 is a catalytic residue.

This sequence belongs to the IUNH family. RihA subfamily.

Hydrolyzes cytidine or uridine to ribose and cytosine or uracil, respectively. This Salmonella paratyphi B (strain ATCC BAA-1250 / SPB7) protein is Pyrimidine-specific ribonucleoside hydrolase RihA.